The sequence spans 313 residues: Porphobilinogen deaminase (313 aa).

An S-(dipyrrolylmethanemethyl)cysteine modification is found at C241.

The protein belongs to the HMBS family. As to quaternary structure, monomer. Dipyrromethane is required as a cofactor.

The catalysed reaction is 4 porphobilinogen + H2O = hydroxymethylbilane + 4 NH4(+). Its pathway is porphyrin-containing compound metabolism; protoporphyrin-IX biosynthesis; coproporphyrinogen-III from 5-aminolevulinate: step 2/4. Tetrapolymerization of the monopyrrole PBG into the hydroxymethylbilane pre-uroporphyrinogen in several discrete steps. In Sulfurimonas denitrificans (strain ATCC 33889 / DSM 1251) (Thiomicrospira denitrificans (strain ATCC 33889 / DSM 1251)), this protein is Porphobilinogen deaminase.